The following is a 316-amino-acid chain: UDP-N-acetylenolpyruvoylglucosamine reductase (316 aa).

The FAD-binding PCMH-type domain maps to 27-225; that stretch reads VGGKAERFYR…KTAINALLKK (199 aa). Residue Arg190 is part of the active site. The Proton donor role is filled by Ser239. Glu309 is a catalytic residue.

This sequence belongs to the MurB family. FAD is required as a cofactor.

The protein resides in the cytoplasm. It carries out the reaction UDP-N-acetyl-alpha-D-muramate + NADP(+) = UDP-N-acetyl-3-O-(1-carboxyvinyl)-alpha-D-glucosamine + NADPH + H(+). It participates in cell wall biogenesis; peptidoglycan biosynthesis. In terms of biological role, cell wall formation. This is UDP-N-acetylenolpyruvoylglucosamine reductase from Coxiella burnetii (strain CbuK_Q154) (Coxiella burnetii (strain Q154)).